A 263-amino-acid chain; its full sequence is uncharacterized protein (263 aa).

Positions 72–168 (LDKKETKELS…RTIVEIRNTK (97 aa)) form a coiled coil. The segment at 76 to 158 (ETKELSKKEK…EKKEKKEKED (83 aa)) is disordered. Residues 83 to 95 (KEKKQLKKEKKAL) are compositionally biased toward basic residues. Positions 96–107 (KKENKGGKDKKD) are enriched in basic and acidic residues. A compositionally biased stretch (basic residues) spans 108–121 (KKDKKDKKDKKDKK). Composition is skewed to basic and acidic residues over residues 122–131 (DKKDKGDKKD) and 139–158 (KHDD…EKED).

This is an uncharacterized protein from Dictyostelium discoideum (Social amoeba).